The primary structure comprises 136 residues: Large-conductance mechanosensitive channel (136 aa).

The next 4 membrane-spanning stretches (helical) occupy residues 9-29, 32-52, 54-74, and 79-99; these read AFAS…GAAF, IVSS…LGGV, FSDL…VVIA, and IQTV…LKAI.

This sequence belongs to the MscL family. Homopentamer.

The protein localises to the cell inner membrane. In terms of biological role, channel that opens in response to stretch forces in the membrane lipid bilayer. May participate in the regulation of osmotic pressure changes within the cell. The sequence is that of Large-conductance mechanosensitive channel from Shewanella oneidensis (strain ATCC 700550 / JCM 31522 / CIP 106686 / LMG 19005 / NCIMB 14063 / MR-1).